A 96-amino-acid chain; its full sequence is Small cysteine and glycine repeat-containing protein 7 (96 aa).

The tract at residues 4–80 is 14 X 2 AA repeats of CG; the sequence is CGCGSCGGCG…TCGSCGCGCG (77 aa).

It belongs to the KRTAP type 28 family.

Its function is as follows. In the hair cortex, hair keratin intermediate filaments are embedded in an interfilamentous matrix, consisting of hair keratin-associated proteins (KRTAP), which are essential for the formation of a rigid and resistant hair shaft through their extensive disulfide bond cross-linking with abundant cysteine residues of hair keratins. The matrix proteins include the high-sulfur and high-glycine-tyrosine keratins. The polypeptide is Small cysteine and glycine repeat-containing protein 7 (Homo sapiens (Human)).